Here is a 216-residue protein sequence, read N- to C-terminus: MILVPLITVTVVAGTILVCYILYICRKKIRTVYNDNKIIMTKLKKIKSSNSSKSSKSTDNESDWEDHCSAMEQNNDVDNISRNEILDDDSFAGSLIWDNESNVIAPSTEHIYDSVAGSTRLINNDCNEQTIYQNTTVINETETIEVLNEDTKQNPSYSSNPFVNYNKTSICSKSNPFITELNNKFSENNPFRRAHSDDYLNKQEHDDIESSVVSLV.

Methionine 1 is a topological domain (extracellular). A helical transmembrane segment spans residues 2-22 (ILVPLITVTVVAGTILVCYIL). Topologically, residues 23-216 (YICRKKIRTV…DIESSVVSLV (194 aa)) are cytoplasmic. Phosphotyrosine; by host is present on residues tyrosine 112 and tyrosine 132. Short sequence motifs (NPF-motif) lie at residues 160 to 162 (NPF), 175 to 177 (NPF), and 189 to 191 (NPF).

Belongs to the orthopoxvirus OPG164 protein family. Interacts with host NCK. Interacts with protein OPG161 (via C-terminus). Interacts with protein OPG056. Interacts (via C-terminus) with host kinesin light chain/KLC1. Interacts with host intersectin-1/ITSN1 and EPS15. Post-translationally, phosphorylated on Tyr-112 and Tyr-132. Phosphorylations activate the host ARP2-ARP3 complex and lead to actin nucleation.

The protein localises to the host cell membrane. Its function is as follows. Involved in the intracellular transport and egress of virions to the host cell surface with help of protein OPG056. Also participates in the formation of actin tails at the plasma membrane to allow efficient actin-based motility and thus cell to cell transmission of viral particles. Recruits host intersectin-1/ITSN1 and activates host CDC42 to drive ARP2/3-mediated actin polymerization. The polypeptide is Protein OPG164 (OPG164) (Variola virus (isolate Human/India/Ind3/1967) (VARV)).